Consider the following 278-residue polypeptide: Hydroxyethylthiazole kinase (278 aa).

Met-46 serves as a coordination point for substrate. Arg-122 and Thr-168 together coordinate ATP. Gly-195 lines the substrate pocket.

The protein belongs to the Thz kinase family. Mg(2+) is required as a cofactor.

It carries out the reaction 5-(2-hydroxyethyl)-4-methylthiazole + ATP = 4-methyl-5-(2-phosphooxyethyl)-thiazole + ADP + H(+). It functions in the pathway cofactor biosynthesis; thiamine diphosphate biosynthesis; 4-methyl-5-(2-phosphoethyl)-thiazole from 5-(2-hydroxyethyl)-4-methylthiazole: step 1/1. Catalyzes the phosphorylation of the hydroxyl group of 4-methyl-5-beta-hydroxyethylthiazole (THZ). This Chloroflexus aggregans (strain MD-66 / DSM 9485) protein is Hydroxyethylthiazole kinase.